The primary structure comprises 110 residues: Iron-sulfur cluster assembly protein CyaY (110 aa).

It belongs to the frataxin family.

Involved in iron-sulfur (Fe-S) cluster assembly. May act as a regulator of Fe-S biogenesis. The protein is Iron-sulfur cluster assembly protein CyaY of Pseudomonas syringae pv. syringae (strain B728a).